The primary structure comprises 248 residues: MTPIFFNQQYPTLVDICARWQLVYDANATFELRFESDTLSLHKRDEPKLDGIVVDFVTGAVAHRRKFGGGRGQSIAKAVGLKQGVMPSVVDGTAGLGRDAFVLASLGCTVTMVERHPVVAALLEDGLRRAYQDAEIGDWMRERMRLFHGSSLEALSKLAQEVDVVYLDPMYPHRDKSALVKKEMRVFQSLVGADLDADGLLAPALALATKRVVVKRPDYAEDLDGVKPNTVIETKKNRFDVYVKAAMK.

Residues 98 to 99, 114 to 115, 150 to 151, and D168 contribute to the S-adenosyl-L-methionine site; these read RD, ER, and SS.

Belongs to the methyltransferase superfamily. RsmJ family.

The protein resides in the cytoplasm. The enzyme catalyses guanosine(1516) in 16S rRNA + S-adenosyl-L-methionine = N(2)-methylguanosine(1516) in 16S rRNA + S-adenosyl-L-homocysteine + H(+). In terms of biological role, specifically methylates the guanosine in position 1516 of 16S rRNA. This is Ribosomal RNA small subunit methyltransferase J from Shewanella baltica (strain OS195).